The primary structure comprises 141 residues: uncharacterized protein (141 aa).

The protein localises to the cytoplasm. This is an uncharacterized protein from Homo sapiens (Human).